The following is a 609-amino-acid chain: Protein FRIGIDA (609 aa).

Residues 1 to 18 (MSNYPPTVAAQPTTTANP) are compositionally biased toward low complexity. Residues 1–31 (MSNYPPTVAAQPTTTANPLLQRHQSEQRRRE) are disordered. Coiled coils occupy residues 60–97 (DELAAFSVAVETFKRQFDDLQKHIESIENAIDSKLESN) and 409–440 (QIKEQIVSLEKDTLQLDKEMEEKARSLSLMEE). 2 disordered regions span residues 454–488 (RPRLSPMEMPPVTSSSYSPIYRDRSFPSQRDDDQD) and 587–609 (SEERYLGLSNQRSPRSNSSLDPK). Residues 474–484 (YRDRSFPSQRD) are compositionally biased toward basic and acidic residues. Positions 594–609 (LSNQRSPRSNSSLDPK) are enriched in polar residues.

The protein belongs to the Frigida family. As to quaternary structure, homodimer. Component of the transcription activator complex FRI-C composed of FRI, FRL1, SUF4, FLX and FES1. Interacts (via N-terminus) with FRL1 and (via C-terminus) with FLX (via N-terminus), SUF4 (via C-terminus) and FES1 (via C-terminus). Interacts with ASHH2 and RIN1, a component of the SWR1 chromatin-remodeling complex. Interacts with CBP20, FIP1 and FIP2. In terms of tissue distribution, expressed in ovules, but not in stamens.

It is found in the nucleus speckle. Its function is as follows. Required for the regulation of flowering time in the late-flowering phenotype. Involved in the enrichment of a WDR5A-containing COMPASS-like complex at the 'FLOWERING LOCUS C' that trimethylates histone H3 'Lys-4', leading to FLC up-regulation and RNA levels increase. Variants with an early-flowering phenotype (Including cv. Columbia, cv. Landsberg Erecta and cv. Wassilewskija) show loss-of-function mutations of FRI. Able to delay flowering independently of FRL1 activity. Dispensable for the reactivation of FLC in early embryogenesis, but required to maintain high levels of FLC expression in later embryonic and vegetative development. Suppresses the repression of FLC by the autonomous pathway, but has no effect on the expression of the genes involved in this pathway. This chain is Protein FRIGIDA, found in Arabidopsis thaliana (Mouse-ear cress).